The chain runs to 376 residues: Chaperone protein DnaJ (376 aa).

The 66-residue stretch at 5 to 70 (DFYDVLGVSK…EKKQNYDNFG (66 aa)) folds into the J domain. The CR-type zinc finger occupies 137–215 (GKKQDIKFST…CNGQGNKQAS (79 aa)). The Zn(2+) site is built by Cys150, Cys153, Cys167, Cys170, Cys189, Cys192, Cys203, and Cys206. CXXCXGXG motif repeat units follow at residues 150 to 157 (CNTCNGNG), 167 to 174 (CTVCGGNG), 189 to 196 (CPQCAGSG), and 203 to 210 (CTDCNGQG).

This sequence belongs to the DnaJ family. As to quaternary structure, homodimer. It depends on Zn(2+) as a cofactor.

It is found in the cytoplasm. In terms of biological role, participates actively in the response to hyperosmotic and heat shock by preventing the aggregation of stress-denatured proteins and by disaggregating proteins, also in an autonomous, DnaK-independent fashion. Unfolded proteins bind initially to DnaJ; upon interaction with the DnaJ-bound protein, DnaK hydrolyzes its bound ATP, resulting in the formation of a stable complex. GrpE releases ADP from DnaK; ATP binding to DnaK triggers the release of the substrate protein, thus completing the reaction cycle. Several rounds of ATP-dependent interactions between DnaJ, DnaK and GrpE are required for fully efficient folding. Also involved, together with DnaK and GrpE, in the DNA replication of plasmids through activation of initiation proteins. This chain is Chaperone protein DnaJ, found in Pelagibacter ubique (strain HTCC1062).